A 298-amino-acid chain; its full sequence is 5'-AMP-activated protein kinase subunit beta (298 aa).

The tract at residues 1–98 (MGNVQSQEGE…KTHQPYSGPC (98 aa)) is disordered. The segment covering 19–30 (QDATTTPDNANN) has biased composition (polar residues). The segment covering 48-59 (LNQEGEMSDDNQ) has biased composition (acidic residues). A compositionally biased stretch (polar residues) spans 60 to 77 (QEGGNNRTSQNGTSGSSG). A compositionally biased stretch (basic residues) spans 78-91 (HTKRRSQTSGKKTH). 250–252 (DQS) contacts ADP.

It belongs to the 5'-AMP-activated protein kinase beta subunit family. As to quaternary structure, AMPK is a heterotrimer of an alpha catalytic subunit (ssp2), a beta (amk2) and a gamma non-catalytic subunits (cbs2). The beta subunit serves as a bridge between the catalytic and the regulatory subunit.

The protein localises to the cytoplasm. Its function is as follows. Beta subunit of AMP-activated protein kinase (AMPK), which is required for transcriptional, metabolic, and developmental adaptations in response to glucose limitation. Has a structural role, mediating heterotrimer formation, and a regulatory role, defining carbon source-regulated subcellular location and substrate specificity of the AMPK kinase complex. The polypeptide is 5'-AMP-activated protein kinase subunit beta (amk2) (Schizosaccharomyces pombe (strain 972 / ATCC 24843) (Fission yeast)).